A 233-amino-acid chain; its full sequence is TATA-box-binding protein 1 (233 aa).

2 tandem repeats follow at residues 58-134 (LQNI…ARIV) and 148-225 (IQNI…YPVL).

It belongs to the TBP family. As to quaternary structure, belongs to the TFIID complex together with the TBP-associated factors (TAFs). Binds DNA as monomer.

The protein localises to the nucleus. General transcription factor that functions at the core of the DNA-binding multiprotein factor TFIID. Binding of TFIID to the TATA box is the initial transcriptional step of the pre-initiation complex (PIC), playing a role in the activation of eukaryotic genes transcribed by RNA polymerase II. This is TATA-box-binding protein 1 (TBP1) from Triticum aestivum (Wheat).